The following is a 188-amino-acid chain: Putative manganese efflux pump MntP (188 aa).

6 helical membrane passes run 3–23 (MITLFGLALALAMDAFAVALG), 39–59 (LGWHFGLFQAMMPIIGWLAGL), 65–85 (IETYDHWVAFGLLVCVGGKMI), 104–124 (GMSLIMLSVATSIDALAVGLS), 125–145 (LAIVGISVWFPALIIGIIAGV), and 167–187 (IAGGLILIGIGLKILWEHTLG).

The protein belongs to the MntP (TC 9.B.29) family.

It localises to the cell inner membrane. Probably functions as a manganese efflux pump. This is Putative manganese efflux pump MntP from Syntrophotalea carbinolica (strain DSM 2380 / NBRC 103641 / GraBd1) (Pelobacter carbinolicus).